The chain runs to 361 residues: 3-dehydroquinate synthase (361 aa).

Residues 72-77 (SGEKEK), 130-131 (TT), K142, and K151 contribute to the NAD(+) site. Positions 184, 247, and 264 each coordinate Zn(2+).

The protein belongs to the sugar phosphate cyclases superfamily. Dehydroquinate synthase family. It depends on Co(2+) as a cofactor. Zn(2+) serves as cofactor. The cofactor is NAD(+).

The protein resides in the cytoplasm. The enzyme catalyses 7-phospho-2-dehydro-3-deoxy-D-arabino-heptonate = 3-dehydroquinate + phosphate. It functions in the pathway metabolic intermediate biosynthesis; chorismate biosynthesis; chorismate from D-erythrose 4-phosphate and phosphoenolpyruvate: step 2/7. Functionally, catalyzes the conversion of 3-deoxy-D-arabino-heptulosonate 7-phosphate (DAHP) to dehydroquinate (DHQ). This is 3-dehydroquinate synthase from Bacillus cereus (strain ZK / E33L).